A 709-amino-acid chain; its full sequence is Ribosomal RNA large subunit methyltransferase K/L (709 aa).

The THUMP domain maps to 43-154 (LAYRITLWTR…NGVITIAMNF (112 aa)).

Belongs to the methyltransferase superfamily. RlmKL family.

It localises to the cytoplasm. The catalysed reaction is guanosine(2445) in 23S rRNA + S-adenosyl-L-methionine = N(2)-methylguanosine(2445) in 23S rRNA + S-adenosyl-L-homocysteine + H(+). It catalyses the reaction guanosine(2069) in 23S rRNA + S-adenosyl-L-methionine = N(2)-methylguanosine(2069) in 23S rRNA + S-adenosyl-L-homocysteine + H(+). Its function is as follows. Specifically methylates the guanine in position 2445 (m2G2445) and the guanine in position 2069 (m7G2069) of 23S rRNA. This chain is Ribosomal RNA large subunit methyltransferase K/L, found in Shewanella baltica (strain OS185).